Consider the following 419-residue polypeptide: Serine hydroxymethyltransferase (419 aa).

Residues L121 and 125 to 127 (GHL) contribute to the (6S)-5,6,7,8-tetrahydrofolate site. K230 carries the post-translational modification N6-(pyridoxal phosphate)lysine. Residue 355–357 (SPF) participates in (6S)-5,6,7,8-tetrahydrofolate binding.

This sequence belongs to the SHMT family. As to quaternary structure, homodimer. Pyridoxal 5'-phosphate serves as cofactor.

Its subcellular location is the cytoplasm. The enzyme catalyses (6R)-5,10-methylene-5,6,7,8-tetrahydrofolate + glycine + H2O = (6S)-5,6,7,8-tetrahydrofolate + L-serine. The protein operates within one-carbon metabolism; tetrahydrofolate interconversion. Its pathway is amino-acid biosynthesis; glycine biosynthesis; glycine from L-serine: step 1/1. Functionally, catalyzes the reversible interconversion of serine and glycine with tetrahydrofolate (THF) serving as the one-carbon carrier. This reaction serves as the major source of one-carbon groups required for the biosynthesis of purines, thymidylate, methionine, and other important biomolecules. Also exhibits THF-independent aldolase activity toward beta-hydroxyamino acids, producing glycine and aldehydes, via a retro-aldol mechanism. The protein is Serine hydroxymethyltransferase of Streptococcus equi subsp. equi (strain 4047).